Here is a 240-residue protein sequence, read N- to C-terminus: UDP-2,3-diacylglucosamine hydrolase (240 aa).

Mn(2+) is bound by residues D8, H10, D41, N79, and H114. 79 to 80 (NR) provides a ligand contact to substrate. Substrate-binding residues include D122, S160, N164, K167, and H195. 2 residues coordinate Mn(2+): H195 and H197.

The protein belongs to the LpxH family. Mn(2+) serves as cofactor.

It is found in the cell inner membrane. The catalysed reaction is UDP-2-N,3-O-bis[(3R)-3-hydroxytetradecanoyl]-alpha-D-glucosamine + H2O = 2-N,3-O-bis[(3R)-3-hydroxytetradecanoyl]-alpha-D-glucosaminyl 1-phosphate + UMP + 2 H(+). It participates in glycolipid biosynthesis; lipid IV(A) biosynthesis; lipid IV(A) from (3R)-3-hydroxytetradecanoyl-[acyl-carrier-protein] and UDP-N-acetyl-alpha-D-glucosamine: step 4/6. Hydrolyzes the pyrophosphate bond of UDP-2,3-diacylglucosamine to yield 2,3-diacylglucosamine 1-phosphate (lipid X) and UMP by catalyzing the attack of water at the alpha-P atom. Involved in the biosynthesis of lipid A, a phosphorylated glycolipid that anchors the lipopolysaccharide to the outer membrane of the cell. This chain is UDP-2,3-diacylglucosamine hydrolase, found in Salmonella paratyphi A (strain ATCC 9150 / SARB42).